The chain runs to 89 residues: Mitochondrial import inner membrane translocase subunit Tim9 (89 aa).

A2 is subject to N-acetylalanine. A Twin CX3C motif motif is present at residues 28-52; it reads CFLDCVKDFTTREVKPEEVTCSEHC. 2 cysteine pairs are disulfide-bonded: C28–C52 and C32–C48.

Belongs to the small Tim family. As to quaternary structure, heterohexamer; composed of 3 copies of TIMM9 and 3 copies of TIMM10/TIM10A, named soluble 70 kDa complex. The complex forms a 6-bladed alpha-propeller structure and associates with the TIMM22 component of the TIM22 complex. Interacts with multi-pass transmembrane proteins in transit. Also forms a complex composed of TIMM9, TIMM10/TIM10A and FXC1/TIM10B.

It is found in the mitochondrion inner membrane. Mitochondrial intermembrane chaperone that participates in the import and insertion of multi-pass transmembrane proteins into the mitochondrial inner membrane. May also be required for the transfer of beta-barrel precursors from the TOM complex to the sorting and assembly machinery (SAM complex) of the outer membrane. Acts as a chaperone-like protein that protects the hydrophobic precursors from aggregation and guide them through the mitochondrial intermembrane space. The chain is Mitochondrial import inner membrane translocase subunit Tim9 (Timm9) from Mus musculus (Mouse).